The chain runs to 1367 residues: MEKIENLKWKDVTFESIEIDPDAGVVLVSVEKFSSEVENLVSLLEKETRFRVIVNGAQKSNGDLKGKILSLLNGNVPYIKDVVFEGNRLILKVLGDFARDRIASKLRSTKKQLDELLPPGTEIMFEVVEPPEDLLKKEVPQPEKREEPKGEELKIEDENHIFGQKPRKIVFTPSKIFEYNKKTSVKGKVFKIEKIEGKKTVLLIYLTDGEDSLICKVFNDVEKVEGKISLGDVIVATGDLLLENGEPTLYVKGITKLPEAKRMDNSPVKRVELHAHTKFSDQDAITDVNEYVKRAKEWGFPAVALTDHGNVQAIPYFYDAAKEAGIKPIFGIEAYLVSDVEPVIRNLSYDSSFENATFVVLDFETTGLDPQVDEIIEIGAVKIQDGQIVDEYHTLIKPSREISRRSSEITGITQEMLENKRSIEEVLPEFLGFLENSIIVAHNANFDYRFLRLWIKKVMGLDWERPYIDTLALAKSLLKMRSYSLDSVVEKLGLGPFRHHRALDDARVTAQVFLRFVEMMKKIGITKLSEIENLKDTIDYTALKPFHCTILVQNKKGLKNLYKLVSDSYIKYFYGVPRILKSALIENREGLLVGSACISGELGRAALEGASDSELEEIAKFYDYIEVMPLDVIAEDEEDLDRERLKEVYRRLYRIAKKLNKFVVMTGDVHFLDPEDARGRAALLAPQGNRNFENQPALYLRTTEEMLEKAMEIFEDEEIAREVVIENPNRIADMIEEVQPLEKKLHPPIIENADEIVRSLTMKRAYEIYGDPLPEIVQKRVERELNAIINHGYAVLYLIAQELVQKSMSDGYVVGSRGSVGSSLVANLLGITEVNPLPPHYRCPECKYFKVVEDDRYGAGYDLPDKKCPVCGAPLRKDGHDIPFETFMGFEGDKVPDIDLNFSGEYQERAHRFVEELFGKDHVYRAGTINTIAEKSAVGYVRSYEEKTGKKLRKAEMERLVSMITGVKRTTGQHPGGLMIIPKDKEVYDFTPIQYPANDRNAGVFTTHFAYETIHDDLVKIDALGHDDPTFIKMLKDLTGIDPMTIPMDDPDTLAIFSSVKPLGVDPVELESDVGTYGIPEFGTEFVRGMLVETRPKSFAELVRISGLSHGTDVWLNNARDWINLGYAKLSDVISCRDDIMNFLIHKGMEPSLAFKIMENVRKGKGITEEMESEMRKLKVPEWFIESCKRIKYLFPKAHAVAYVSMAFRIAYFKVHYPLQFYAAYFTIKGDQFDPVLVLKGKEAIKRRLRELKAMTGKDVQKKNEESVLEVVLEMILRGFSFLPPDIFKSDAKKFLIEGNSLRIPFNKLPGLGDSVAESIVRAREEKPFTSVEDLMKRTKVNKNHIELMRSLGVLGSLPETEQFTLF.

The Exonuclease domain maps to 358–513 (FVVLDFETTG…DDARVTAQVF (156 aa)).

It belongs to the DNA polymerase type-C family. PolC subfamily.

It is found in the cytoplasm. The enzyme catalyses DNA(n) + a 2'-deoxyribonucleoside 5'-triphosphate = DNA(n+1) + diphosphate. In terms of biological role, required for replicative DNA synthesis. This DNA polymerase also exhibits 3' to 5' exonuclease activity. In Thermotoga petrophila (strain ATCC BAA-488 / DSM 13995 / JCM 10881 / RKU-1), this protein is DNA polymerase III PolC-type.